The primary structure comprises 124 residues: Large ribosomal subunit protein bL12 (124 aa).

The protein belongs to the bacterial ribosomal protein bL12 family. Homodimer. Part of the ribosomal stalk of the 50S ribosomal subunit. Forms a multimeric L10(L12)X complex, where L10 forms an elongated spine to which 2 to 4 L12 dimers bind in a sequential fashion. Binds GTP-bound translation factors.

In terms of biological role, forms part of the ribosomal stalk which helps the ribosome interact with GTP-bound translation factors. Is thus essential for accurate translation. The sequence is that of Large ribosomal subunit protein bL12 from Brucella anthropi (strain ATCC 49188 / DSM 6882 / CCUG 24695 / JCM 21032 / LMG 3331 / NBRC 15819 / NCTC 12168 / Alc 37) (Ochrobactrum anthropi).